Reading from the N-terminus, the 409-residue chain is Exonuclease V (409 aa).

C86 is a binding site for [4Fe-4S] cluster. 2 residues coordinate Mg(2+): D176 and D207. Positions 386, 389, and 395 each coordinate [4Fe-4S] cluster.

This sequence belongs to the EXO5 family. As to quaternary structure, monomer. Mg(2+) serves as cofactor. [4Fe-4S] cluster is required as a cofactor.

It is found in the cytoplasm. It localises to the nucleus. The protein localises to the mitochondrion. In terms of biological role, single-stranded DNA (ssDNA) bidirectional exonuclease involved in DNA repair. Probably involved in DNA repair following ultraviolet (UV) irradiation and interstrand cross-links (ICLs) damage. Has both 5'-3' and 3'-5' exonuclease activities with a strong preference for 5'-ends. Acts as a sliding exonuclease that loads at ssDNA ends and then slides along the ssDNA prior to cutting; however the sliding and the 3'-5' exonuclease activities are abolished upon binding to the replication protein A (RPA) complex that enforces 5'-directionality activity. Plays a redundant role with the flap endonuclease FEN1/rad2 for the maintenance of mitochondrial DNA. This Schizosaccharomyces pombe (strain 972 / ATCC 24843) (Fission yeast) protein is Exonuclease V (exo5).